The sequence spans 309 residues: Ferrochelatase (309 aa).

Fe cation-binding residues include His-185 and Glu-262.

Belongs to the ferrochelatase family.

It localises to the cytoplasm. It catalyses the reaction heme b + 2 H(+) = protoporphyrin IX + Fe(2+). It functions in the pathway porphyrin-containing compound metabolism; protoheme biosynthesis; protoheme from protoporphyrin-IX: step 1/1. Functionally, catalyzes the ferrous insertion into protoporphyrin IX. The polypeptide is Ferrochelatase (Campylobacter jejuni subsp. jejuni serotype O:6 (strain 81116 / NCTC 11828)).